The chain runs to 326 residues: tRNA-cytidine(32) 2-sulfurtransferase (326 aa).

The PP-loop motif signature appears at 63–68; it reads SGGKDS. The [4Fe-4S] cluster site is built by cysteine 138, cysteine 141, and cysteine 229.

This sequence belongs to the TtcA family. As to quaternary structure, homodimer. Requires Mg(2+) as cofactor. The cofactor is [4Fe-4S] cluster.

It is found in the cytoplasm. It catalyses the reaction cytidine(32) in tRNA + S-sulfanyl-L-cysteinyl-[cysteine desulfurase] + AH2 + ATP = 2-thiocytidine(32) in tRNA + L-cysteinyl-[cysteine desulfurase] + A + AMP + diphosphate + H(+). It participates in tRNA modification. Functionally, catalyzes the ATP-dependent 2-thiolation of cytidine in position 32 of tRNA, to form 2-thiocytidine (s(2)C32). The sulfur atoms are provided by the cysteine/cysteine desulfurase (IscS) system. This Leptothrix cholodnii (strain ATCC 51168 / LMG 8142 / SP-6) (Leptothrix discophora (strain SP-6)) protein is tRNA-cytidine(32) 2-sulfurtransferase.